The following is a 741-amino-acid chain: MSLEDCYNVTQSYAAVAIHKEQTADYVEAIALFQKAKRNILMNPEFKYARERLHVMDYEDRHYVETLLCMLEQLTIRIEFLTKEIAQQEAAYKDIQNTQKSLVTQSSTGSANVAYISGNGPGDRSFIDDGNYSASSFERQNRTAPLQSKVTTASLKPNIPRTSMSSSPTASRTSLRKGAGELETHSAVKSAKKASVKSKSVLPPSKSLARTGLPAEVSTQNNANRAALLAWGSLNSSKPKHALPPSYISSEAAQASRSSFQVERHRPTPDNSAVIEAARRTYSSISSSSSPFKKKTQSHLPNRTTEVPSISKQLSKSSTSIATVAPSLASVSSVTKSPSPTPQSAPRAQSASTETAQDLDFLTPPRLSVNNPFLSDLYPASEQGLSSCEEKDSPVDGDEFFNHTNEEEIIEKQFQSTSISAMTSEKQEQILRECPDIDEELGKSILREIVVSGDEVHWDDISGLEFAKHSLKEAVVYPFLRPDLFQGLREPARGMLLFGPPGTGKTMLARAVATESRSVFFSISASSLTSKFLGESEKLVRALFTLAKKLSPSIIFVDEIDSLLSARSSDGNEHETSRRIKTEFLIQWSSLARAAASRQTADHPRVLVLAATNLPWCIDDAARRRFVRRTYIPLPDETTRRLHLNNLLKYQKHSLSLEDIEAIVKATEYYSGSDLTALAKDAAMGPLRSLGESLLFTKMESIRPINLDDFKTSIKVIRPSVNLQGLERYSEWDKEFGSQGH.

A coiled-coil region spans residues 64–103; the sequence is VETLLCMLEQLTIRIEFLTKEIAQQEAAYKDIQNTQKSLV. The segment covering 137 to 155 has biased composition (polar residues); the sequence is FERQNRTAPLQSKVTTASL. Disordered regions lie at residues 137–214, 280–318, and 330–364; these read FERQ…TGLP, RTYS…SKSS, and SVSS…FLTP. 2 stretches are compositionally biased toward low complexity: residues 161–173 and 197–209; these read RTSM…ASRT and KSKS…KSLA. The span at 298 to 308 shows a compositional bias: polar residues; that stretch reads SHLPNRTTEVP. Composition is skewed to low complexity over residues 309 to 318 and 330 to 344; these read SISKQLSKSS and SVSS…TPQS. Positions 346-356 are enriched in polar residues; sequence PRAQSASTETA. ATP is bound at residue 499 to 506; that stretch reads GPPGTGKT.

This sequence belongs to the AAA ATPase family.

The protein localises to the cytoplasm. The protein resides in the nucleus. This is an uncharacterized protein from Schizosaccharomyces pombe (strain 972 / ATCC 24843) (Fission yeast).